The chain runs to 177 residues: Glia associated membrane protein glam-1 (177 aa).

The next 3 helical transmembrane spans lie at 19-39 (PLVV…FWMS), 42-62 (FGMA…LFGA), and 76-96 (VTFA…VVFA).

The protein localises to the membrane. The protein is Glia associated membrane protein glam-1 of Caenorhabditis elegans.